A 47-amino-acid polypeptide reads, in one-letter code: MWHLVVLLEELCERGINFRALAQSIFAQQWGDECCKSKTICDLKVIV.

In terms of domain architecture, Resolvase/invertase-type recombinase catalytic spans 1-47; sequence MWHLVVLLEELCERGINFRALAQSIFAQQWGDECCKSKTICDLKVIV.

The protein belongs to the site-specific recombinase resolvase family.

This is Putative protein PinH (pinH) from Escherichia coli (strain K12).